Reading from the N-terminus, the 172-residue chain is Putative defense protein (172 aa).

The first 21 residues, 1–21 (MKLVVAAVLAMAASRWRRLSA), serve as a signal peptide directing secretion. Residues 22 to 172 (HGQVPSSTCA…LRQLDNAVAA (151 aa)) form the Reelin domain.

It belongs to the insect defense protein family. In terms of tissue distribution, in adults, in hemolymph.

It is found in the secreted. Its function is as follows. May have antimicrobial activity. This Locusta migratoria (Migratory locust) protein is Putative defense protein.